A 716-amino-acid chain; its full sequence is Polyribonucleotide nucleotidyltransferase (716 aa).

Mg(2+) is bound by residues D486 and D492. The 60-residue stretch at 553-612 (PHIYNIKINPEKIKDVIGKGGAVIRALSDETDTKIDISDDGNITIAALSQKSAAFAQQRI) folds into the KH domain. In terms of domain architecture, S1 motif spans 622–690 (GRIYQGTVTR…RQGRIRLSIK (69 aa)).

Belongs to the polyribonucleotide nucleotidyltransferase family. In terms of assembly, component of the RNA degradosome, which is a multiprotein complex involved in RNA processing and mRNA degradation. It depends on Mg(2+) as a cofactor.

The protein localises to the cytoplasm. It carries out the reaction RNA(n+1) + phosphate = RNA(n) + a ribonucleoside 5'-diphosphate. Involved in mRNA degradation. Catalyzes the phosphorolysis of single-stranded polyribonucleotides processively in the 3'- to 5'-direction. This is Polyribonucleotide nucleotidyltransferase from Hamiltonella defensa subsp. Acyrthosiphon pisum (strain 5AT).